We begin with the raw amino-acid sequence, 465 residues long: Dihydrolipoyl dehydrogenase (465 aa).

FAD contacts are provided by residues 34 to 42, Lys51, and Gly114; that span reads EKREAGGTC. A disulfide bridge links Cys42 with Cys47. Residues 180 to 184, Glu203, Val237, and 264 to 267 contribute to the NAD(+) site; these read GGGVI and SIGR. Residues Asp307 and Ala315 each contribute to the FAD site. Catalysis depends on His439, which acts as the Proton acceptor.

Belongs to the class-I pyridine nucleotide-disulfide oxidoreductase family. FAD serves as cofactor.

It is found in the cytoplasm. The enzyme catalyses N(6)-[(R)-dihydrolipoyl]-L-lysyl-[protein] + NAD(+) = N(6)-[(R)-lipoyl]-L-lysyl-[protein] + NADH + H(+). Functionally, the branched-chain alpha-keto dehydrogenase complex catalyzes the overall conversion of alpha-keto acids to acyl-CoA and CO(2). It contains multiple copies of 3 enzymatic components: branched-chain alpha-keto acid decarboxylase (E1), lipoamide acyltransferase (E2) and lipoamide dehydrogenase (E3). The protein is Dihydrolipoyl dehydrogenase (lpdA) of Chlamydia trachomatis serovar D (strain ATCC VR-885 / DSM 19411 / UW-3/Cx).